Reading from the N-terminus, the 172-residue chain is Stellate protein CG33239/CG33241 (172 aa).

The protein belongs to the casein kinase 2 subunit beta family. As to quaternary structure, interacts in vitro with the casein kinase 2 alpha subunit (CkII-alpha). The relevance of such interaction is however unclear in vivo. Probably not expressed in wild-type flies. In males lacking the Y chromosome, it is testis-specific and constitutes the main component of star-shaped crystals.

Functionally, unknown. In males lacking the Y chromosome, its strong overexpression leads to the appearance of proteinaceous star-shaped crystals in the primary spermatocytes causing meiotic drive, possibly by interfering with normal casein kinase 2 activity. The polypeptide is Stellate protein CG33239/CG33241 (Ste:CG33239) (Drosophila melanogaster (Fruit fly)).